The primary structure comprises 372 residues: MWPFAPVPAGAKCRLVETLPENMDFRSDHLTTFECFNEIITLAKKYIYIASFCCNPLSTTRGALIFDKLKEASEKGIKIIVLLDERGKRNLGELQSHCPDINFITVNIDKKNNVGLLLGCFWVSDDERCYVGNASFTGGSIHTIKTLGVYSDYPPLATDLRRRFDTFKAFNSAKNSWLNLCSAACCLPVSTAYHIKNPIGGVFFTDSPEHLLGYSRDLDTDVVIDKLKSAKTSIDIEHLAIVPTTRVDGNSYYWPDIYNSIIEAAINRGVKIRLLVGNWDKNDVYSMATARSLDALCVQNDLSVKVFTIQNNTKLLIVDDEYVHITSANFDGTHYQNHGFVSFNSIDKQLVSEAKKIFERDWVSSHSKSLKI.

The YPPL motif lies at 153–156 (YPPL). 2 S-palmitoyl cysteine; by host lipidation sites follow: Cys-185 and Cys-186. Positions 307 to 334 (FTIQNNTKLLIVDDEYVHITSANFDGTH) constitute a PLD phosphodiesterase domain.

It belongs to the orthopoxvirus OPG057 family. Interacts with protein OPG190. Post-translationally, palmitoylated. Attachment of the palmitate moiety is essential for correct intracellular targeting and protein function.

Its subcellular location is the virion membrane. It localises to the host Golgi apparatus. The protein localises to the host trans-Golgi network. It is found in the host endoplasmic reticulum membrane. It carries out the reaction a 1,2-diacyl-sn-glycero-3-phosphocholine + H2O = a 1,2-diacyl-sn-glycero-3-phosphate + choline + H(+). Its function is as follows. Major envelope protein that plays a role in the biogenesis of the viral double membrane and in egress of virus from the host cell. Produces the wrapped form of virus that is required for cell-to-cell spread. Acts as a lipase with broad specificity including phospholipase C, phospholipase A, and triacylglycerol lipase activities. This is Envelope phospholipase OPG057 (OPG057) from Homo sapiens (Human).